Reading from the N-terminus, the 432-residue chain is RING finger protein 44 (432 aa).

The tract at residues 1–86 is disordered; that stretch reads MRPWALAVTR…GGSPRMLHPA (86 aa). Residues 56 to 65 show a composition bias toward pro residues; sequence QQPPSRPPHL. The segment at 380-421 adopts an RING-type; atypical zinc-finger fold; sequence CVVCFSDFEARQLLRVLPCNHEFHTKCVDKWLKANRTCPICR.

This Homo sapiens (Human) protein is RING finger protein 44 (RNF44).